The primary structure comprises 134 residues: Small ribosomal subunit protein uS8c (134 aa).

It belongs to the universal ribosomal protein uS8 family. Part of the 30S ribosomal subunit.

The protein localises to the plastid. It is found in the chloroplast. In terms of biological role, one of the primary rRNA binding proteins, it binds directly to 16S rRNA central domain where it helps coordinate assembly of the platform of the 30S subunit. The polypeptide is Small ribosomal subunit protein uS8c (rps8) (Populus alba (White poplar)).